The sequence spans 239 residues: Geranylgeranylglyceryl phosphate synthase (239 aa).

Mg(2+)-binding residues include D18 and S45. Sn-glycerol 1-phosphate-binding positions include 166-172 (YLEAGSG), 197-198 (GG), and 219-220 (GT).

It belongs to the GGGP/HepGP synthase family. Group II subfamily. Mg(2+) serves as cofactor.

The protein resides in the cytoplasm. It carries out the reaction sn-glycerol 1-phosphate + (2E,6E,10E)-geranylgeranyl diphosphate = sn-3-O-(geranylgeranyl)glycerol 1-phosphate + diphosphate. The protein operates within membrane lipid metabolism; glycerophospholipid metabolism. Prenyltransferase that catalyzes the transfer of the geranylgeranyl moiety of geranylgeranyl diphosphate (GGPP) to the C3 hydroxyl of sn-glycerol-1-phosphate (G1P). This reaction is the first ether-bond-formation step in the biosynthesis of archaeal membrane lipids. This Pyrobaculum islandicum (strain DSM 4184 / JCM 9189 / GEO3) protein is Geranylgeranylglyceryl phosphate synthase.